A 338-amino-acid polypeptide reads, in one-letter code: MO25-like protein 2 (338 aa).

It belongs to the Mo25 family.

The protein resides in the cytoplasm. The protein localises to the cytoskeleton. It is found in the spindle pole. Its function is as follows. Regulates asymmetric cell division in Q.p neuroblast lineage. Plays a role in cell shedding during embryogenesis. This chain is MO25-like protein 2 (mop-25.2), found in Caenorhabditis elegans.